A 215-amino-acid chain; its full sequence is Pyrrolidone-carboxylate peptidase (215 aa).

Active-site residues include glutamate 80, cysteine 143, and histidine 167.

The protein belongs to the peptidase C15 family. In terms of assembly, homotetramer.

The protein resides in the cytoplasm. It carries out the reaction Release of an N-terminal pyroglutamyl group from a polypeptide, the second amino acid generally not being Pro.. Its function is as follows. Removes 5-oxoproline from various penultimate amino acid residues except L-proline. The polypeptide is Pyrrolidone-carboxylate peptidase (Yersinia pseudotuberculosis serotype O:3 (strain YPIII)).